The sequence spans 887 residues: Exocyst complex component SEC3A (887 aa).

Coiled-coil stretches lie at residues isoleucine 221–glutamate 248 and leucine 281–glutamine 301. Residues glycine 542 to leucine 581 form a disordered region. A compositionally biased stretch (acidic residues) spans aspartate 555–glutamate 569.

It belongs to the SEC3 family. The exocyst complex is composed of SEC3, SEC5, SEC6, SEC8, SEC10, EXO70A1 and EXO84B. Interacts with EXO70A1, SEC5A and ICR1, but not with ICR2. Binds to EXO70H1. Binds directly to B1L. In terms of tissue distribution, widely expressed. Preferentially expressed in tissues containing dividing and expanding cells, such as the shoot apical meristem, root tip, lateral root primordia and developing embryos.

Its subcellular location is the cytoplasm. The protein localises to the cytosol. The protein resides in the cell membrane. It is found in the cytoskeleton. It localises to the phragmoplast. Its subcellular location is the secreted. The protein localises to the extracellular exosome. Component of the exocyst complex involved in the docking of exocytic vesicles with fusion sites on the plasma membrane during regulated or polarized secretion. Involved in polarized cell growth and organ morphogenesis. During cytokinesis, involved in cell plate initiation, cell plate maturation and formation of new primary cell wall. During cytokinesis, involved in cell plate initiation, cell plate maturation and formation of new primary cell wall. The chain is Exocyst complex component SEC3A from Arabidopsis thaliana (Mouse-ear cress).